The sequence spans 567 residues: Urease subunit alpha (567 aa).

Residues 128–567 (GGIDPHIHFI…LPLAQLYHLF (440 aa)) form the Urease domain. Residues His133, His135, and Lys216 each coordinate Ni(2+). Position 216 is an N6-carboxylysine (Lys216). Residue His218 coordinates substrate. Residues His245 and His271 each coordinate Ni(2+). The active-site Proton donor is His319. Asp359 contacts Ni(2+).

It belongs to the metallo-dependent hydrolases superfamily. Urease alpha subunit family. As to quaternary structure, heterotrimer of UreA (gamma), UreB (beta) and UreC (alpha) subunits. Three heterotrimers associate to form the active enzyme. Ni cation serves as cofactor. Carboxylation allows a single lysine to coordinate two nickel ions.

It localises to the cytoplasm. The catalysed reaction is urea + 2 H2O + H(+) = hydrogencarbonate + 2 NH4(+). It participates in nitrogen metabolism; urea degradation; CO(2) and NH(3) from urea (urease route): step 1/1. The chain is Urease subunit alpha from Marinobacter nauticus (strain ATCC 700491 / DSM 11845 / VT8) (Marinobacter aquaeolei).